Here is a 282-residue protein sequence, read N- to C-terminus: Small ribosomal subunit protein uS3 (282 aa).

One can recognise a KH type-2 domain in the interval 43 to 111; it reads IRRLMSKGME…QVQLNILEVK (69 aa). Residues 217-282 are disordered; it reads AQSQAAAPRA…IGKGSNGTEA (66 aa). The span at 228-240 shows a compositional bias: basic and acidic residues; that stretch reads RRNERGDRPDRGA. Low complexity predominate over residues 256–269; it reads AVATGSAPTGTAAT.

It belongs to the universal ribosomal protein uS3 family. In terms of assembly, part of the 30S ribosomal subunit. Forms a tight complex with proteins S10 and S14.

Binds the lower part of the 30S subunit head. Binds mRNA in the 70S ribosome, positioning it for translation. The chain is Small ribosomal subunit protein uS3 from Kineococcus radiotolerans (strain ATCC BAA-149 / DSM 14245 / SRS30216).